We begin with the raw amino-acid sequence, 435 residues long: Phosphomethylpyrimidine synthase (435 aa).

Residues asparagine 67, methionine 96, tyrosine 125, histidine 163, 185–187 (SRG), 226–229 (DGLR), and glutamate 265 each bind substrate. Histidine 269 serves as a coordination point for Zn(2+). Tyrosine 292 contacts substrate. A Zn(2+)-binding site is contributed by histidine 333. Residues cysteine 408, cysteine 411, and cysteine 415 each contribute to the [4Fe-4S] cluster site.

The protein belongs to the ThiC family. [4Fe-4S] cluster serves as cofactor.

It catalyses the reaction 5-amino-1-(5-phospho-beta-D-ribosyl)imidazole + S-adenosyl-L-methionine = 4-amino-2-methyl-5-(phosphooxymethyl)pyrimidine + CO + 5'-deoxyadenosine + formate + L-methionine + 3 H(+). The protein operates within cofactor biosynthesis; thiamine diphosphate biosynthesis. In terms of biological role, catalyzes the synthesis of the hydroxymethylpyrimidine phosphate (HMP-P) moiety of thiamine from aminoimidazole ribotide (AIR) in a radical S-adenosyl-L-methionine (SAM)-dependent reaction. In Thermus thermophilus (strain ATCC 27634 / DSM 579 / HB8), this protein is Phosphomethylpyrimidine synthase.